The primary structure comprises 290 residues: Signal peptidase I (290 aa).

The Cytoplasmic segment spans residues 1–13 (MKFLRSVYAFCSS). The chain crosses the membrane as a helical span at residues 14-34 (WVGTIVIVLLVIFFIAQAFII). Residues 35-290 (PSRSMVGTLY…KIIKKENATH (256 aa)) are Extracellular-facing. Residues serine 38 and lysine 106 contribute to the active site.

This sequence belongs to the peptidase S26 family.

It is found in the cell membrane. It carries out the reaction Cleavage of hydrophobic, N-terminal signal or leader sequences from secreted and periplasmic proteins.. This chain is Signal peptidase I (lepB), found in Helicobacter pylori (strain ATCC 700392 / 26695) (Campylobacter pylori).